Consider the following 376-residue polypeptide: Succinyl-diaminopimelate desuccinylase (376 aa).

His67 is a Zn(2+) binding site. Asp69 is an active-site residue. A Zn(2+)-binding site is contributed by Asp100. Glu134 (proton acceptor) is an active-site residue. Glu135, Glu163, and His349 together coordinate Zn(2+).

It belongs to the peptidase M20A family. DapE subfamily. Homodimer. Requires Zn(2+) as cofactor. Co(2+) is required as a cofactor.

The catalysed reaction is N-succinyl-(2S,6S)-2,6-diaminopimelate + H2O = (2S,6S)-2,6-diaminopimelate + succinate. Its pathway is amino-acid biosynthesis; L-lysine biosynthesis via DAP pathway; LL-2,6-diaminopimelate from (S)-tetrahydrodipicolinate (succinylase route): step 3/3. Functionally, catalyzes the hydrolysis of N-succinyl-L,L-diaminopimelic acid (SDAP), forming succinate and LL-2,6-diaminopimelate (DAP), an intermediate involved in the bacterial biosynthesis of lysine and meso-diaminopimelic acid, an essential component of bacterial cell walls. This Shewanella sediminis (strain HAW-EB3) protein is Succinyl-diaminopimelate desuccinylase.